A 114-amino-acid chain; its full sequence is Fluoride-specific ion channel FluC 1 (114 aa).

Helical transmembrane passes span 28–48, 56–76, and 91–111; these read VFPW…GFLH, ILLL…TFQV, and IIYL…GSWL. Na(+)-binding residues include glycine 66 and threonine 69.

This sequence belongs to the fluoride channel Fluc/FEX (TC 1.A.43) family.

It is found in the cell membrane. The catalysed reaction is fluoride(in) = fluoride(out). Na(+) is not transported, but it plays an essential structural role and its presence is essential for fluoride channel function. Fluoride-specific ion channel. Important for reducing fluoride concentration in the cell, thus reducing its toxicity. This Ligilactobacillus salivarius (strain UCC118) (Lactobacillus salivarius) protein is Fluoride-specific ion channel FluC 1.